The chain runs to 236 residues: Small ribosomal subunit protein uS2c (236 aa).

This sequence belongs to the universal ribosomal protein uS2 family.

The protein localises to the plastid. It is found in the chloroplast. The sequence is that of Small ribosomal subunit protein uS2c (rps2) from Aethionema grandiflorum (Persian stone-cress).